The primary structure comprises 73 residues: UPF0150 protein ssl0259 (73 aa).

Belongs to the UPF0150 family.

The polypeptide is UPF0150 protein ssl0259 (Synechocystis sp. (strain ATCC 27184 / PCC 6803 / Kazusa)).